The sequence spans 466 residues: MADTASLRAPLCTEQFGSGAPRSCSAAADGSLQWDRAQRWGWFSRASITKPGQHEGGGRGPWAALTTLSGLRSVLLPQGFPDSVSPDYLQYQLWDSVQAFASSLSGSLATQAVLQGLGVGNAKASVSAATSTWLVKDSTGMLGRIIFAWWKGSKLDCNAKQWRLFADILNDTAMFLEIMAPMYPIFFTMTVSTSNLAKCIVGVAGGATRAALTMHQARRNNMADVSAKDSSQETVVNLAGLLVSLLMLPLVSDCLSLSLGCFILLTALHIYANYRAVRALVLETLNESRLQLVLKHFLQRGEVLEPASANQMEPLWTGFWPSLSLSLGVPLHHLVSSVSELKQLVEGHQEPYLLCWNQSQNQVQVALSQVAGPETVLRAATHGLILGALQEDGPLPGELAELRDMVQAGPKNESWILVRETHQVLDTLFPKFLKGLQAAGWKTEKHHLEVDEWRATWPLSPEKKVL.

Ala2 is modified (N-acetylalanine). The chain crosses the membrane as a helical span at residues 245 to 265 (LLMLPLVSDCLSLSLGCFILL).

This sequence belongs to the RUS1 family.

The protein localises to the membrane. In Rattus norvegicus (Rat), this protein is RUS family member 1 (Rusf1).